An 865-amino-acid chain; its full sequence is cGMP-specific 3',5'-cyclic phosphodiesterase (865 aa).

Phosphoserine is present on S92. GAF domains lie at 154–304 (DVTA…GIVL) and 336–493 (SLEV…GLGI). The PDEase domain maps to 526–850 (ETRELQALSA…QKWQALAEQQ (325 aa)). Residue H603 is the Proton donor of the active site. The Zn(2+) site is built by H607, H643, D644, and D754. D644 is a Mg(2+) binding site. Q807 is a 3',5'-cyclic GMP binding site.

The protein belongs to the cyclic nucleotide phosphodiesterase family. It depends on Zn(2+) as a cofactor. The cofactor is Mg(2+). Post-translationally, phosphorylation is regulated by binding of cGMP to the two allosteric sites. Phosphorylation by PRKG1 leads to its activation.

The enzyme catalyses 3',5'-cyclic GMP + H2O = GMP + H(+). The protein operates within purine metabolism; 3',5'-cyclic GMP degradation; GMP from 3',5'-cyclic GMP: step 1/1. Functionally, plays a role in signal transduction by regulating the intracellular concentration of cyclic nucleotides. This phosphodiesterase catalyzes the specific hydrolysis of cGMP to 5'-GMP. Specifically regulates nitric-oxide-generated cGMP. This chain is cGMP-specific 3',5'-cyclic phosphodiesterase (Pde5a), found in Mus musculus (Mouse).